Reading from the N-terminus, the 247-residue chain is DASH complex subunit DUO1 (247 aa).

S2 carries the post-translational modification N-acetylserine. 2 disordered regions span residues 27–47 (LNNTTNKFPKSTGGGASDNIS) and 172–247 (NRKG…KMFR). Residues 152–180 (LHNVIALKKKEILDLRQKLENRKGEKDAA) are a coiled coil. Over residues 232-247 (NRWTKPTASSSRKMFR) the composition is skewed to polar residues.

This sequence belongs to the DASH complex DUO1 family. Component of the DASH complex consisting of ASK1, DAD1, DAD2, DAD3, DAD4, DAM1, DUO1, HSK3, SPC19 and SPC34, with a stoichiometry of one copy of each subunit per complex. Multiple DASH complexes oligomerize to form a ring that encircles spindle microtubules and organizes the rod-like NDC80 complexes of the outer kinetochore. DASH complex oligomerization strengthens microtubule attachments. On cytoplasmic microtubules, DASH complexes appear to form patches instead of rings. Within the complex, DAM1 and DUO1 may form the microtubule connections.

Its subcellular location is the nucleus. The protein resides in the cytoplasm. It localises to the cytoskeleton. The protein localises to the spindle pole. It is found in the chromosome. Its subcellular location is the centromere. The protein resides in the kinetochore. Component of the DASH complex that connects microtubules with kinetochores and couples microtubule depolymerisation to chromosome movement; it is involved in retrieving kinetochores to the spindle poles before their re-orientation on the spindle in early mitosis and allows microtubule depolymerization to pull chromosomes apart and resist detachment during anaphase. Kinetochores, consisting of a centromere-associated inner segment and a microtubule-contacting outer segment, play a crucial role in chromosome segregation by mediating the physical connection between centromeric DNA and microtubules. Kinetochores also serve as an input point for the spindle assembly checkpoint, which delays anaphase until all chromosomes have bioriented on the mitotic spindle. During spindle-kinetochore attachment, kinetochores first attach to the lateral surface of spindle microtubules, which supports the congression of chromosomes toward the middle of the dividing cell; they then slide along towards the spindle pole, a process independent of the DASH complex but requiring the NDC80 complex. When the end of a disassembling microtubule reaches the laterally attached kinetochore, the DASH complex together with the NDC80 complex and STU2 convert lateral attachment to end-on capture to produce a structure that can track with microtubule shortening and sustain attachment when tension is applied across sister kinetochores upon their biorientation. Microtubule depolymerization proceeds by protofilament splaying and induces the kinetochore-attached DASH complex to slide longitudinally, thereby helping to transduce depolymerization energy into pulling forces to disjoin chromatids. Incorrect microtubule attachments are corrected by releasing microubules from the kinetochore through phosphorylation by IPL1 of kinetochore components. Links the microtubule cytoskeleton to chromosomes during interphase. Also contributes to the poleward transport of kinetochores on microtubules following centromeric DNA replication in S-phase. In Saccharomyces cerevisiae (strain ATCC 204508 / S288c) (Baker's yeast), this protein is DASH complex subunit DUO1 (DUO1).